A 786-amino-acid chain; its full sequence is Myosin light chain kinase 3 (786 aa).

Phosphoserine is present on Ser155. Disordered regions lie at residues 233-258 (EALD…SEDT), 279-315 (RMSQ…IHSD), and 333-443 (ELFE…GRRV). Over residues 279–293 (RMSQSAGEGTSSSKP) the composition is skewed to polar residues. Phosphoserine is present on residues Ser341 and Ser422. The region spanning 482-737 (VSQHEVLGGG…ATQCLKHEWL (256 aa)) is the Protein kinase domain. ATP-binding positions include 488–496 (LGGGRFGQV) and Lys511. Asp603 acts as the Proton acceptor in catalysis.

The protein belongs to the protein kinase superfamily. CAMK Ser/Thr protein kinase family. It depends on Mg(2+) as a cofactor. In terms of processing, phosphorylated on serine residues. Expressed in cardiomyocytes (at protein level). Up-regulated in heart after experimental myocardial infarction at the mRNA level.

Its subcellular location is the cytoplasm. It catalyses the reaction L-seryl-[myosin light chain] + ATP = O-phospho-L-seryl-[myosin light chain] + ADP + H(+). The catalysed reaction is L-threonyl-[myosin light chain] + ATP = O-phospho-L-threonyl-[myosin light chain] + ADP + H(+). Calmodulin-dependent kinase that phosphorylates MYL2 in vitro. Promotes sarcomere formation in cardiomyocytes. Increases cardiomyocyte contractility. The polypeptide is Myosin light chain kinase 3 (Mylk3) (Rattus norvegicus (Rat)).